The sequence spans 148 residues: Small ribosomal subunit protein uS9 (148 aa).

The protein belongs to the universal ribosomal protein uS9 family.

The protein is Small ribosomal subunit protein uS9 (RpS16) of Aedes aegypti (Yellowfever mosquito).